We begin with the raw amino-acid sequence, 311 residues long: Methenyltetrahydromethanopterin cyclohydrolase (311 aa).

The protein belongs to the MCH family.

Its subcellular location is the cytoplasm. The catalysed reaction is 5,10-methenyl-5,6,7,8-tetrahydromethanopterin + H2O = N(5)-formyl-5,6,7,8-tetrahydromethanopterin + H(+). In terms of biological role, catalyzes the hydrolysis of methenyl-H(4)MPT(+) to 5-formyl-H(4)MPT. This Halobacterium salinarum (strain ATCC 29341 / DSM 671 / R1) protein is Methenyltetrahydromethanopterin cyclohydrolase.